The following is a 594-amino-acid chain: MHEHLKEKLAILPDQPGCYLMKDKQGTVIYVGKAKVLKNRVRSYFTGSHDGKTLRLVGEIVDFEYIVTSSNLEALILELNLIKKYDPKYNIQLKDDKTYPFIKITAEKQPRLLITRNVKKDKGKYFGPYPNAQSAHETKKLLDRMYPLRKCSNMPDKVCLYYHMGQCLAPCVKEVTDEQNKEIVDEIIKFLNGGHKEIRSELETKMYEASEKLEFERAKELRDQIAHIDAIMEKQKMIMSDLVDRDVFGYAVDKGWMCVQVFFVRKGKLIERDVSMFPIYDEPEEGFLTFIGQFYENSSHFKPKEIVVPGSIDSELVERFLEVEATQPKRGKKKDLVELANKNAKIALEEKFHLIERDEERTVKAIDNLGKQLGIETPYRIEAFDNSNIQGTNPVSAMIAFIDGKPAKKEYRKYKIKTVQGPDDYESMREVVRRRYTRALKENLPLPDLIIIDGGKGHLAATSDVLENELGLYIPMAGLVKDDKHKTSHLIIGDPPEPVMLERNSQEFYLLQRIQDEVHRFAITFHRQLHGKSVIQSALDDIPGIGDKRKKVLLKHFGSLKKMKEASIAEFVEAGMPKNVAEMIYTYLTDKKTL.

The 78-residue stretch at 14–91 (DQPGCYLMKD…IKKYDPKYNI (78 aa)) folds into the GIY-YIG domain. The 36-residue stretch at 196–231 (KEIRSELETKMYEASEKLEFERAKELRDQIAHIDAI) folds into the UVR domain.

Belongs to the UvrC family. As to quaternary structure, interacts with UvrB in an incision complex.

The protein localises to the cytoplasm. Its function is as follows. The UvrABC repair system catalyzes the recognition and processing of DNA lesions. UvrC both incises the 5' and 3' sides of the lesion. The N-terminal half is responsible for the 3' incision and the C-terminal half is responsible for the 5' incision. This is UvrABC system protein C from Bacillus mycoides (strain KBAB4) (Bacillus weihenstephanensis).